The primary structure comprises 302 residues: Nucleotide-binding protein Rsph17025_2562 (302 aa).

Position 15-22 (15-22 (GPSGAGRT)) interacts with ATP. Position 62 to 65 (62 to 65 (DVRN)) interacts with GTP.

The protein belongs to the RapZ-like family.

Displays ATPase and GTPase activities. This Cereibacter sphaeroides (strain ATCC 17025 / ATH 2.4.3) (Rhodobacter sphaeroides) protein is Nucleotide-binding protein Rsph17025_2562.